Consider the following 298-residue polypeptide: ATP synthase F(1) complex subunit gamma, mitochondrial (298 aa).

A mitochondrion-targeting transit peptide spans 1–25 (MFSRAGVAGLSAWTLQPQWIQVRNM). At Lys-39 the chain carries N6-acetyllysine. At Lys-49 the chain carries N6-succinyllysine. Lys-55 is modified (N6-acetyllysine). Lys-115 is modified (N6-acetyllysine; alternate). Residue Lys-115 is modified to N6-succinyllysine; alternate. A Phosphoserine modification is found at Ser-146. Lys-154 is subject to N6-acetyllysine; alternate. At Lys-154 the chain carries N6-succinyllysine; alternate. An N6-acetyllysine modification is found at Lys-197. Lys-270 bears the N6-succinyllysine mark.

This sequence belongs to the ATPase gamma chain family. As to quaternary structure, component of the ATP synthase complex composed at least of ATP5F1A/subunit alpha, ATP5F1B/subunit beta, ATP5MC1/subunit c (homooctomer), MT-ATP6/subunit a, MT-ATP8/subunit 8, ATP5ME/subunit e, ATP5MF/subunit f, ATP5MG/subunit g, ATP5MK/subunit k, ATP5MJ/subunit j, ATP5F1C/subunit gamma, ATP5F1D/subunit delta, ATP5F1E/subunit epsilon, ATP5PF/subunit F6, ATP5PB/subunit b, ATP5PD/subunit d, ATP5PO/subunit OSCP. ATP synthase complex consists of a soluble F(1) head domain (subunits alpha(3) and beta(3)) - the catalytic core - and a membrane F(0) domain - the membrane proton channel (subunits c, a, 8, e, f, g, k and j). These two domains are linked by a central stalk (subunits gamma, delta, and epsilon) rotating inside the F1 region and a stationary peripheral stalk (subunits F6, b, d, and OSCP). Interacts with FLVCR2; this interaction occurs in the absence of heme and is disrupted upon heme binding.

It localises to the mitochondrion inner membrane. Its function is as follows. Subunit gamma, of the mitochondrial membrane ATP synthase complex (F(1)F(0) ATP synthase or Complex V) that produces ATP from ADP in the presence of a proton gradient across the membrane which is generated by electron transport complexes of the respiratory chain. ATP synthase complex consist of a soluble F(1) head domain - the catalytic core - and a membrane F(1) domain - the membrane proton channel. These two domains are linked by a central stalk rotating inside the F(1) region and a stationary peripheral stalk. During catalysis, ATP synthesis in the catalytic domain of F(1) is coupled via a rotary mechanism of the central stalk subunits to proton translocation. In vivo, can only synthesize ATP although its ATP hydrolase activity can be activated artificially in vitro. With the central stalk subunit delta, is essential for the biogenesis of F(1) catalytic part of the ATP synthase complex namely in the formation of F1 assembly intermediate. The chain is ATP synthase F(1) complex subunit gamma, mitochondrial from Macaca fascicularis (Crab-eating macaque).